The following is a 282-amino-acid chain: D-alanine aminotransferase (282 aa).

A substrate-binding site is contributed by Tyr32. Arg51 provides a ligand contact to pyridoxal 5'-phosphate. 2 residues coordinate substrate: Arg99 and His101. The active-site Proton acceptor is Lys146. The residue at position 146 (Lys146) is an N6-(pyridoxal phosphate)lysine. A pyridoxal 5'-phosphate-binding site is contributed by Glu178.

The protein belongs to the class-IV pyridoxal-phosphate-dependent aminotransferase family. Homodimer. It depends on pyridoxal 5'-phosphate as a cofactor.

It catalyses the reaction D-alanine + 2-oxoglutarate = D-glutamate + pyruvate. In terms of biological role, acts on the D-isomers of alanine, leucine, aspartate, glutamate, aminobutyrate, norvaline and asparagine. The enzyme transfers an amino group from a substrate D-amino acid to the pyridoxal phosphate cofactor to form pyridoxamine and an alpha-keto acid in the first half-reaction. The second half-reaction is the reverse of the first, transferring the amino group from the pyridoxamine to a second alpha-keto acid to form the product D-amino acid via a ping-pong mechanism. This is an important process in the formation of D-alanine and D-glutamate, which are essential bacterial cell wall components. The sequence is that of D-alanine aminotransferase (dat) from Staphylococcus haemolyticus.